A 515-amino-acid chain; its full sequence is Tabersonine 6,7-epoxidase isoform 2 (515 aa).

Residues 1–21 (MEFVVSPFAFLIFFFILLKMI) traverse the membrane as a helical segment. N-linked (GlcNAc...) asparagine glycosylation is found at Asn-173, Asn-259, and Asn-352. Cys-449 provides a ligand contact to heme.

The protein belongs to the cytochrome P450 family. Requires heme as cofactor. Mainly expressed in aerial organs, including stems, leaves and flowers.

It localises to the endoplasmic reticulum membrane. It catalyses the reaction (-)-tabersonine + reduced [NADPH--hemoprotein reductase] + O2 = lochnericine + oxidized [NADPH--hemoprotein reductase] + H2O + H(+). Its pathway is alkaloid biosynthesis. Its function is as follows. Component of the monoterpenoid indole alkaloids (MIAs, e.g. echitovenine, tabersonine, lochnericine, 19-hydroxytabersonine and horhammericine) biosynthetic pathway; MIAs are used in cancer treatment and other medical applications. Cytochrome P450 catalyzing the conversion of tabersonine to lochnericine. In Catharanthus roseus (Madagascar periwinkle), this protein is Tabersonine 6,7-epoxidase isoform 2.